The sequence spans 607 residues: Polypeptide N-acetylgalactosaminyltransferase 18 (607 aa).

The Cytoplasmic segment spans residues 1–12; sequence MVCTRKTKTLVS. A helical; Signal-anchor for type II membrane protein membrane pass occupies residues 13-35; it reads TCVILSGMTNIICLLYVGWVTNY. At 36 to 607 the chain is on the lumenal side; it reads IASVYVRGQE…ITNVLRSLAS (572 aa). 5 disulfide bridges follow: Cys-144-Cys-377, Cys-368-Cys-447, Cys-482-Cys-498, Cys-530-Cys-543, and Cys-571-Cys-591. A glycan (N-linked (GlcNAc...) asparagine) is linked at Asn-146. Positions 153–267 are catalytic subdomain A; that stretch reads LPEVSIVFIF…VGWAEPVLTR (115 aa). Residue Asp-194 participates in substrate binding. Asn-195 is a glycosylation site (N-linked (GlcNAc...) asparagine). Residues Asp-251 and His-253 each contribute to the Mn(2+) site. Asn-320 carries N-linked (GlcNAc...) asparagine glycosylation. Residues 324 to 385 are catalytic subdomain B; the sequence is PIRSPALIGC…PCSRIAHIER (62 aa). His-382 provides a ligand contact to Mn(2+). Substrate-binding residues include Arg-385 and Tyr-390. The Ricin B-type lectin domain maps to 469 to 599; that stretch reads AYGVLQNSLK…KCSGQHWSIT (131 aa).

The protein belongs to the glycosyltransferase 2 family. GalNAc-T subfamily. Mn(2+) is required as a cofactor.

It is found in the golgi apparatus membrane. The catalysed reaction is L-seryl-[protein] + UDP-N-acetyl-alpha-D-galactosamine = a 3-O-[N-acetyl-alpha-D-galactosaminyl]-L-seryl-[protein] + UDP + H(+). It carries out the reaction L-threonyl-[protein] + UDP-N-acetyl-alpha-D-galactosamine = a 3-O-[N-acetyl-alpha-D-galactosaminyl]-L-threonyl-[protein] + UDP + H(+). Its pathway is protein modification; protein glycosylation. Catalyzes the initial reaction in O-linked oligosaccharide biosynthesis, the transfer of an N-acetyl-D-galactosamine (GalNAc) residue from UDP-GalNAc to a serine or threonine residue on the protein receptor. The polypeptide is Polypeptide N-acetylgalactosaminyltransferase 18 (GALNT18) (Homo sapiens (Human)).